Consider the following 80-residue polypeptide: Antitoxin VapB15 (80 aa).

Residues 60–80 (DFSNDEIESFSDTDRKLADES) are disordered. Glu-67 provides a ligand contact to Mg(2+). Glu-67 contributes to the Mn(2+) binding site. The segment covering 71 to 80 (DTDRKLADES) has biased composition (basic and acidic residues).

In terms of assembly, forms a VapB15-VapC15(2) heterotrimer and a VapB15(2)-VapC15(2) heterotetramer; each toxin pair forms a homodimer which creates a channel in which the antitoxin binds. It depends on Mg(2+) as a cofactor. The cofactor is Mn(2+).

Antitoxin component of a type II toxin-antitoxin (TA) system. Neutralizes the toxic effect of cognate toxin VapC15. This chain is Antitoxin VapB15 (vapB15), found in Mycobacterium tuberculosis (strain CDC 1551 / Oshkosh).